A 217-amino-acid polypeptide reads, in one-letter code: 3,4-dihydroxy-2-butanone 4-phosphate synthase (217 aa).

Residues arginine 37–glutamate 38, aspartate 42, arginine 150–threonine 154, and glutamate 174 each bind D-ribulose 5-phosphate. Glutamate 38 is a Mg(2+) binding site. Histidine 153 provides a ligand contact to Mg(2+).

This sequence belongs to the DHBP synthase family. Homodimer. Requires Mg(2+) as cofactor. Mn(2+) serves as cofactor.

It carries out the reaction D-ribulose 5-phosphate = (2S)-2-hydroxy-3-oxobutyl phosphate + formate + H(+). Its pathway is cofactor biosynthesis; riboflavin biosynthesis; 2-hydroxy-3-oxobutyl phosphate from D-ribulose 5-phosphate: step 1/1. Functionally, catalyzes the conversion of D-ribulose 5-phosphate to formate and 3,4-dihydroxy-2-butanone 4-phosphate. The chain is 3,4-dihydroxy-2-butanone 4-phosphate synthase from Pectobacterium atrosepticum (strain SCRI 1043 / ATCC BAA-672) (Erwinia carotovora subsp. atroseptica).